Here is a 121-residue protein sequence, read N- to C-terminus: Flagellar protein FliT (121 aa).

The required for homodimerization stretch occupies residues Met-1–Leu-50. The segment at Met-60–Val-98 is fliD binding.

It belongs to the FliT family. Homodimer. Interacts with FliD and FlhC.

Its subcellular location is the cytoplasm. The protein localises to the cytosol. Dual-function protein that regulates the transcription of class 2 flagellar operons and that also acts as an export chaperone for the filament-capping protein FliD. As a transcriptional regulator, acts as an anti-FlhDC factor; it directly binds FlhC, thus inhibiting the binding of the FlhC/FlhD complex to class 2 promoters, resulting in decreased expression of class 2 flagellar operons. As a chaperone, effects FliD transition to the membrane by preventing its premature polymerization, and by directing it to the export apparatus. The sequence is that of Flagellar protein FliT from Escherichia coli O6:K15:H31 (strain 536 / UPEC).